The chain runs to 126 residues: Small ribosomal subunit protein uS12 (126 aa).

A disordered region spans residues 1-26; sequence MPTINQLVRKGRASETTKSKSPALQD. Residue D89 is modified to 3-methylthioaspartic acid. Positions 102–126 are disordered; that stretch reads LDTQGVKDRRQARSKYGAKRAKAAK. Residues 113-126 show a composition bias toward basic residues; it reads ARSKYGAKRAKAAK.

It belongs to the universal ribosomal protein uS12 family. As to quaternary structure, part of the 30S ribosomal subunit. Contacts proteins S8 and S17. May interact with IF1 in the 30S initiation complex.

Its function is as follows. With S4 and S5 plays an important role in translational accuracy. Functionally, interacts with and stabilizes bases of the 16S rRNA that are involved in tRNA selection in the A site and with the mRNA backbone. Located at the interface of the 30S and 50S subunits, it traverses the body of the 30S subunit contacting proteins on the other side and probably holding the rRNA structure together. The combined cluster of proteins S8, S12 and S17 appears to hold together the shoulder and platform of the 30S subunit. This Burkholderia mallei (strain ATCC 23344) protein is Small ribosomal subunit protein uS12.